Here is a 377-residue protein sequence, read N- to C-terminus: NIF3-like protein 1 (377 aa).

At K109 the chain carries N6-acetyllysine. The segment at 244–377 (LLLYTGMGRL…ETDRDPLHVI (134 aa)) is mediates interaction with COPS2. T255 is subject to Phosphothreonine. S259 carries the post-translational modification Phosphoserine.

It belongs to the GTP cyclohydrolase I type 2/NIF3 family. In terms of assembly, homodimer. Interacts with COPS2. Interacts with THOC7.

The protein resides in the cytoplasm. The protein localises to the nucleus. Its function is as follows. May function as a transcriptional corepressor through its interaction with COPS2, negatively regulating the expression of genes involved in neuronal differentiation. This is NIF3-like protein 1 from Bos taurus (Bovine).